Here is a 198-residue protein sequence, read N- to C-terminus: Nucleoplasmin (198 aa).

The tract at residues 35 to 38 (SDED) is acidic tract A1. Positions 125–145 (SWAEEEGEEEVEEEEEEEDPE) are enriched in acidic residues. Residues 125 to 198 (SWAEEEGEEE…GRGRKPAAKK (74 aa)) form a disordered region. The acidic tract A2 stretch occupies residues 128–145 (EEEGEEEVEEEEEEEDPE). Residues 150-167 (AVKRPAASKKGSQAKKKK) show a composition bias toward basic residues. Residues 152–167 (KRPAASKKGSQAKKKK) carry the Bipartite nuclear localization signal motif. The interval 172-174 (EEE) is acidic tract A3. Positions 183–198 (KKGKGAGRGRKPAAKK) are enriched in basic residues.

This sequence belongs to the nucleoplasmin family. Homopentamer. In terms of tissue distribution, expressed in oocytes.

Its subcellular location is the nucleus. Acts as a chaperone for histones, such as histone H2A-H2B, and thus regulates the assembly of nucleosome cores. Involved in chromatin remodeling, especially during fertilization and early embryonic development. May be involved in sperm chromatin decondensation during fertilization. The polypeptide is Nucleoplasmin (Rhinella marina (Cane toad)).